The chain runs to 200 residues: Nucleoside triphosphate pyrophosphatase (200 aa).

Asp-79 acts as the Proton acceptor in catalysis.

Belongs to the Maf family. The cofactor is a divalent metal cation.

It localises to the cytoplasm. The catalysed reaction is a ribonucleoside 5'-triphosphate + H2O = a ribonucleoside 5'-phosphate + diphosphate + H(+). The enzyme catalyses a 2'-deoxyribonucleoside 5'-triphosphate + H2O = a 2'-deoxyribonucleoside 5'-phosphate + diphosphate + H(+). Nucleoside triphosphate pyrophosphatase. May have a dual role in cell division arrest and in preventing the incorporation of modified nucleotides into cellular nucleic acids. The chain is Nucleoside triphosphate pyrophosphatase from Legionella pneumophila (strain Corby).